The following is a 334-amino-acid chain: ADP-L-glycero-D-manno-heptose-6-epimerase (334 aa).

Residues 11–12, 32–33, K39, K54, 77–81, and N94 contribute to the NADP(+) site; these read FI, DN, and QGACS. The active-site Proton acceptor is Y141. K145 contributes to the NADP(+) binding site. Position 171 (N171) interacts with substrate. NADP(+) is bound by residues V172 and K180. The active-site Proton acceptor is the K180. Substrate contacts are provided by residues R182, H189, 203-206, R216, and Y295; that span reads FGSN.

This sequence belongs to the NAD(P)-dependent epimerase/dehydratase family. HldD subfamily. Homopentamer. NADP(+) is required as a cofactor.

The enzyme catalyses ADP-D-glycero-beta-D-manno-heptose = ADP-L-glycero-beta-D-manno-heptose. It participates in nucleotide-sugar biosynthesis; ADP-L-glycero-beta-D-manno-heptose biosynthesis; ADP-L-glycero-beta-D-manno-heptose from D-glycero-beta-D-manno-heptose 7-phosphate: step 4/4. Functionally, catalyzes the interconversion between ADP-D-glycero-beta-D-manno-heptose and ADP-L-glycero-beta-D-manno-heptose via an epimerization at carbon 6 of the heptose. This is ADP-L-glycero-D-manno-heptose-6-epimerase from Neisseria meningitidis serogroup C (strain 053442).